A 144-amino-acid chain; its full sequence is Large ribosomal subunit protein uL16 (144 aa).

This sequence belongs to the universal ribosomal protein uL16 family. As to quaternary structure, part of the 50S ribosomal subunit.

In terms of biological role, binds 23S rRNA and is also seen to make contacts with the A and possibly P site tRNAs. This chain is Large ribosomal subunit protein uL16, found in Clostridium beijerinckii (strain ATCC 51743 / NCIMB 8052) (Clostridium acetobutylicum).